The primary structure comprises 56 residues: Large ribosomal subunit protein bL32 (56 aa).

Residues 1-37 (MAVQQNKKSRSKRGMRRSHDALSTAQLSVDATSGELH) are disordered. Positions 7 to 16 (KKSRSKRGMR) are enriched in basic residues. A compositionally biased stretch (polar residues) spans 21–31 (ALSTAQLSVDA).

This sequence belongs to the bacterial ribosomal protein bL32 family.

In Shewanella pealeana (strain ATCC 700345 / ANG-SQ1), this protein is Large ribosomal subunit protein bL32.